The sequence spans 394 residues: Probable dual specificity protein phosphatase DDB_G0281963 (394 aa).

Residues 2 to 142 (NDVSRIFPGF…LKKYELILKK (141 aa)) enclose the Tyrosine-protein phosphatase domain. Cysteine 86 serves as the catalytic Phosphocysteine intermediate. Positions 147–191 (PQIVEKESEEEDDDEDDDDDDYDSDEDDDDDSEDDDFEEEFDNVV) are disordered. Residues 153-188 (ESEEEDDDEDDDDDDYDSDEDDDDDSEDDDFEEEFD) are compositionally biased toward acidic residues.

This sequence belongs to the protein-tyrosine phosphatase family. Non-receptor class dual specificity subfamily.

It carries out the reaction O-phospho-L-tyrosyl-[protein] + H2O = L-tyrosyl-[protein] + phosphate. It catalyses the reaction O-phospho-L-seryl-[protein] + H2O = L-seryl-[protein] + phosphate. The catalysed reaction is O-phospho-L-threonyl-[protein] + H2O = L-threonyl-[protein] + phosphate. In terms of biological role, has a dual specificity toward Ser/Thr and Tyr-containing proteins. This Dictyostelium discoideum (Social amoeba) protein is Probable dual specificity protein phosphatase DDB_G0281963.